We begin with the raw amino-acid sequence, 460 residues long: Putative RNA-guided DNA endonuclease MT2953 (460 aa).

Catalysis depends on residues D224 and E313. Zn(2+)-binding residues include C372, C375, C389, and C392. D399 is an active-site residue. Residues 415–460 (VVGPVGAAVKRGADRKTGPGPAGGREARKATGHPAGEQPRDGVQVK) form a disordered region.

In the N-terminal section; belongs to the transposase 2 family. This sequence in the C-terminal section; belongs to the transposase 35 family.

Its function is as follows. An RNA-guided dsDNA endonuclease. When guided by an RNA derived from the right-end element of its insertion sequence element (IS), cleaves DNA downstream of the transposon-associated motif (TAM). Cleaves supercoiled and linear DNA in a staggered manner 15-21 bases from the TAM yielding 5'-overhangs. Binds reRNA, an approximately 150 nucleotide base sRNA derived from the 3' end of its own gene, the right end (RE) of the insertion sequence (IS) plus sequence downstream of the IS. This is Putative RNA-guided DNA endonuclease MT2953 from Mycobacterium tuberculosis (strain CDC 1551 / Oshkosh).